The following is a 310-amino-acid chain: Nucleotide-binding protein BAD_0837 (310 aa).

31-38 serves as a coordination point for ATP; that stretch reads GMSGAGRS. Position 82–85 (82–85) interacts with GTP; it reads DVRS.

Belongs to the RapZ-like family.

Displays ATPase and GTPase activities. This is Nucleotide-binding protein BAD_0837 from Bifidobacterium adolescentis (strain ATCC 15703 / DSM 20083 / NCTC 11814 / E194a).